A 205-amino-acid chain; its full sequence is Fe/S biogenesis protein NfuA (205 aa).

Residues Cys162 and Cys165 each contribute to the [4Fe-4S] cluster site.

It belongs to the NfuA family. As to quaternary structure, homodimer. [4Fe-4S] cluster is required as a cofactor.

Involved in iron-sulfur cluster biogenesis. Binds a 4Fe-4S cluster, can transfer this cluster to apoproteins, and thereby intervenes in the maturation of Fe/S proteins. Could also act as a scaffold/chaperone for damaged Fe/S proteins. In Blochmanniella floridana, this protein is Fe/S biogenesis protein NfuA.